We begin with the raw amino-acid sequence, 653 residues long: Laccase ustL (653 aa).

Positions 1-20 are cleaved as a signal peptide; the sequence is MTSLTGLALLLCVLASQSWA. Plastocyanin-like domains follow at residues 31-143 and 173-362; these read WEKG…RPKR and VLSD…ATQV. N74, N220, N235, N255, N277, N405, N463, and N479 each carry an N-linked (GlcNAc...) asparagine glycan. In terms of domain architecture, Plastocyanin-like 3 spans 463-594; it reads NQTVGTEDEK…GGMSIALLDG (132 aa). Residues H501, H504, H506, H576, C577, H578, and H582 each contribute to the Cu cation site. A glycan (N-linked (GlcNAc...) asparagine) is linked at N623.

It belongs to the multicopper oxidase family.

It catalyses the reaction 4 norrubrofusarin + O2 = 2 ustilaginoidin A + 2 H2O. Its pathway is secondary metabolite biosynthesis. Functionally, laccase; part of the gene cluster that mediates the biosynthesis of ustilaginoidins, dimeric gamma-naphthopyrones isolated from different fungal species. The first step in the biosynthesis of ustilaginoidins is the production of gamma-naphthopyrone precursor YWA1 by the non-reducing polyketide synthase ustP, via condensation of one acetyl-CoA starter unit with 6 malonyl-CoA units. YWA1 is then probably substrate of the ustZ to yield norrubrofusarin via a dehydration reaction. A key enzyme in the biosynthetic pathway is the laccase ustL, which catalyzes the oxidative dimerization of norrubrofusarin to ustilaginoidin A. It can produce the M- and P-atropisomers in varying amounts, depending on the reaction conditions. For the biosynthesis of 3-methylustilaginoid in derivatives such as chaetochromin A, a methylated derivative of YWA1 is required. The C-methylation is considered to be catalyzed by ustM, the phosphopantetheine attachment site of which indicates that it acts on the growing polyketide chain before release of the product. For the biosynthesis of chaetochromin A, it is assumed that saturation of the D2 double bond takes place before dimerization, and is probably catalyzed by an external reductase because no candidate gene was identified within the cluster. The polypeptide is Laccase ustL (Ustilaginoidea virens (Rice false smut fungus)).